The following is a 301-amino-acid chain: Homoserine O-acetyltransferase (301 aa).

Residue Cys142 is the Acyl-thioester intermediate of the active site. Substrate is bound by residues Lys163 and Ser192. The active-site Proton acceptor is His235. Glu237 is an active-site residue. Arg249 contributes to the substrate binding site.

This sequence belongs to the MetA family.

It is found in the cytoplasm. It catalyses the reaction L-homoserine + acetyl-CoA = O-acetyl-L-homoserine + CoA. The protein operates within amino-acid biosynthesis; L-methionine biosynthesis via de novo pathway; O-acetyl-L-homoserine from L-homoserine: step 1/1. Its function is as follows. Transfers an acetyl group from acetyl-CoA to L-homoserine, forming acetyl-L-homoserine. This chain is Homoserine O-acetyltransferase, found in Bacillus cereus (strain 03BB102).